A 160-amino-acid polypeptide reads, in one-letter code: 6,7-dimethyl-8-ribityllumazine synthase (160 aa).

Residues tryptophan 28, 59–61, and 81–83 contribute to the 5-amino-6-(D-ribitylamino)uracil site; these read ALE and CVI. Position 86 to 87 (86 to 87) interacts with (2S)-2-hydroxy-3-oxobutyl phosphate; it reads ET. Histidine 89 (proton donor) is an active-site residue. Asparagine 114 serves as a coordination point for 5-amino-6-(D-ribitylamino)uracil. Arginine 128 lines the (2S)-2-hydroxy-3-oxobutyl phosphate pocket.

It belongs to the DMRL synthase family.

The enzyme catalyses (2S)-2-hydroxy-3-oxobutyl phosphate + 5-amino-6-(D-ribitylamino)uracil = 6,7-dimethyl-8-(1-D-ribityl)lumazine + phosphate + 2 H2O + H(+). The protein operates within cofactor biosynthesis; riboflavin biosynthesis; riboflavin from 2-hydroxy-3-oxobutyl phosphate and 5-amino-6-(D-ribitylamino)uracil: step 1/2. Its function is as follows. Catalyzes the formation of 6,7-dimethyl-8-ribityllumazine by condensation of 5-amino-6-(D-ribitylamino)uracil with 3,4-dihydroxy-2-butanone 4-phosphate. This is the penultimate step in the biosynthesis of riboflavin. This is 6,7-dimethyl-8-ribityllumazine synthase from Corynebacterium urealyticum (strain ATCC 43042 / DSM 7109).